The sequence spans 300 residues: MSAKVVLKDFLSQAPIDKLKATLSGHLPVSCITMDAKITSLQPGYHFLFFSLASPESNLNSDGYESLYSPKPNNPFSFKRRIWLHGVLRFHRPLHLFQTSECHELIQEESVKSPSITKEVEACLPKSSFLTKPTSEKQTKHVYIRRKIYDSQHQLCIEEDRTLAYLNRQELAIPKTLRSKSIPQHSWVFTPTPIMVFRYSALMFNAHMIHWNATYATKSENYPNLVLPGPLLVTSMLEYFRSVYPQMSKNMKRFEFRLLSPAFVNQPLRICISETGNLWIDRFTTDLDPPSLIARGRVYT.

It belongs to the HTD2 family.

The protein resides in the mitochondrion. In terms of biological role, mitochondrial 3-hydroxyacyl-thioester dehydratase involved in fatty acid biosynthesis. Required for respiratory growth and for normal mitochondrial morphology. This chain is Hydroxyacyl-thioester dehydratase type 2, mitochondrial (htd2), found in Schizosaccharomyces pombe (strain 972 / ATCC 24843) (Fission yeast).